The primary structure comprises 563 residues: Calmodulin-binding protein 60 G (563 aa).

Residues 1 to 76 are calmodulin-binding; that stretch reads MKIRNSPSFH…SSCVSMERSR (76 aa). Residues 147-263 form a DNA-binding region; the sequence is ESWTVEGFNR…VSATRLAERK (117 aa).

Belongs to the plant ACBP60 protein family. In terms of assembly, interacts with calmodulin (CaM) in the presence of calcium ions; this interaction is required for defense responses. As to quaternary structure, (Microbial infection) Interacts with V.dahliae SCP41; the interaction is direct and inhibits CBP60G. Expressed in seedlings, roots, leaves, inflorescences and flowers, and, to a lower extent, in siliques. Particularly present in guard cells.

It localises to the nucleus. Its function is as follows. Transcription activator that binds DNA in a sequence-specific manner, 5'-GAAATTTTGG-3', to promote the expression of target genes. Recruited to the promoter of ICS1 and other defense-related genes (e.g. PR1, PR2 and EDS5) in response to both biotic (e.g. Pseudomonas syringae pv. maculicola ES4326, P.syringae pv. tomato DC3000, and microbe-associated molecular patterns (MAMPs) such as flg22) and abiotic stresses (e.g. UV-B, drought and abscisic acid), thus triggering rapid defense responses by stimulating salicylic acid (SA) biosynthesis. Involved in basal and systemic acquired resistance to P.syringae and Hyaloperonospora arabidopsidis. Mediates resistance to drought and sensitivity to abscisic acid (ABA), especially for ABA-mediated signaling process that regulates early seedling growth. The polypeptide is Calmodulin-binding protein 60 G (Arabidopsis thaliana (Mouse-ear cress)).